Consider the following 662-residue polypeptide: DNA ligase (662 aa).

Residues 32–36 (DAEYD), 81–82 (SL), and E112 each bind NAD(+). K114 (N6-AMP-lysine intermediate) is an active-site residue. Residues R135, E170, K286, and K310 each coordinate NAD(+). The Zn(2+) site is built by C402, C405, C420, and C425. The region spanning 583–662 (PKGGPLTGST…AELHAMLRGE (80 aa)) is the BRCT domain.

The protein belongs to the NAD-dependent DNA ligase family. LigA subfamily. Requires Mg(2+) as cofactor. Mn(2+) is required as a cofactor.

It carries out the reaction NAD(+) + (deoxyribonucleotide)n-3'-hydroxyl + 5'-phospho-(deoxyribonucleotide)m = (deoxyribonucleotide)n+m + AMP + beta-nicotinamide D-nucleotide.. DNA ligase that catalyzes the formation of phosphodiester linkages between 5'-phosphoryl and 3'-hydroxyl groups in double-stranded DNA using NAD as a coenzyme and as the energy source for the reaction. It is essential for DNA replication and repair of damaged DNA. The chain is DNA ligase from Solibacter usitatus (strain Ellin6076).